The primary structure comprises 1404 residues: DNA-directed RNA polymerase subunit beta' (1404 aa).

Positions 72, 74, 87, and 90 each coordinate Zn(2+). 3 residues coordinate Mg(2+): Asp462, Asp464, and Asp466. The Zn(2+) site is built by Cys816, Cys890, Cys897, and Cys900.

This sequence belongs to the RNA polymerase beta' chain family. The RNAP catalytic core consists of 2 alpha, 1 beta, 1 beta' and 1 omega subunit. When a sigma factor is associated with the core the holoenzyme is formed, which can initiate transcription. Mg(2+) is required as a cofactor. Zn(2+) serves as cofactor.

The catalysed reaction is RNA(n) + a ribonucleoside 5'-triphosphate = RNA(n+1) + diphosphate. Its function is as follows. DNA-dependent RNA polymerase catalyzes the transcription of DNA into RNA using the four ribonucleoside triphosphates as substrates. The chain is DNA-directed RNA polymerase subunit beta' from Azoarcus sp. (strain BH72).